We begin with the raw amino-acid sequence, 259 residues long: MATIKEIKELLVTVKELESPIFLELEKDNRSGVQKEISKRKRVIQAELDENLRLESMLSYEKELYKQGLTLIAGIDEVGRGPLAGPVVAAAVILPKNCKIKGLNDSKKIPKKKHLEIFQAVQDQALSIGIGIIDNQVIDQVNIYEATKLAMQEAISQLSPQPEHLLIDAMKLDLPISQTSIIKGDANSLSIAAASIVAKVTRDELMKEYDQQFSGYDFATNAGYGTAKHLEGLTKLGVTPIHRTSFEPVKSLVLGKKES.

One can recognise an RNase H type-2 domain in the interval 70–258 (TLIAGIDEVG…VKSLVLGKKE (189 aa)). A divalent metal cation is bound by residues D76, E77, and D168.

It belongs to the RNase HII family. It depends on Mn(2+) as a cofactor. Requires Mg(2+) as cofactor.

The protein localises to the cytoplasm. The enzyme catalyses Endonucleolytic cleavage to 5'-phosphomonoester.. Endonuclease that specifically degrades the RNA of RNA-DNA hybrids. In Streptococcus pneumoniae (strain 70585), this protein is Ribonuclease HII.